Reading from the N-terminus, the 218-residue chain is Methylthioribulose-1-phosphate dehydratase (218 aa).

Residues histidine 107 and histidine 109 each coordinate Zn(2+).

Belongs to the aldolase class II family. MtnB subfamily. The cofactor is Zn(2+).

It carries out the reaction 5-(methylsulfanyl)-D-ribulose 1-phosphate = 5-methylsulfanyl-2,3-dioxopentyl phosphate + H2O. It functions in the pathway amino-acid biosynthesis; L-methionine biosynthesis via salvage pathway; L-methionine from S-methyl-5-thio-alpha-D-ribose 1-phosphate: step 2/6. Functionally, catalyzes the dehydration of methylthioribulose-1-phosphate (MTRu-1-P) into 2,3-diketo-5-methylthiopentyl-1-phosphate (DK-MTP-1-P). The sequence is that of Methylthioribulose-1-phosphate dehydratase from Xylella fastidiosa (strain Temecula1 / ATCC 700964).